A 348-amino-acid chain; its full sequence is MTAPSQVLKIRRPDDWHLHLRDGDMLKTVVPYTSEIYGRAIVMPNLAPPVTTVEAAVAYRQRILDAVPAGHDFTPLMTCYLTDSLDPNELERGFNEGVFTAAKLYPANATTNSSHGVTSIDAIMPVLERMEKIGMPLLVHGEVTHADIDIFDREARFIESVMEPLRQRLTALKVVFEHITTKDAADYVRDGNERLAATITPQHLMFNRNHMLVGGVRPHLYCLPILKRNIHQQALRELVASGFNRVFLGTDSAPHARHRKESSCGCAGCFNAPTALGSYATVFEEMNALQHFEAFCSVNGPQFYGLPVNDTFIELVREEQQVAESIALTDDTLVPFLAGETVRWSVKQ.

His-17 and His-19 together coordinate Zn(2+). Residues 19–21 (HLR) and Asn-45 each bind substrate. The Zn(2+) site is built by Lys-103, His-140, and His-178. The residue at position 103 (Lys-103) is an N6-carboxylysine. A substrate-binding site is contributed by His-140. Leu-223 provides a ligand contact to substrate. Asp-251 is a binding site for Zn(2+). Residue Asp-251 is part of the active site. The substrate site is built by His-255 and Ala-267.

The protein belongs to the metallo-dependent hydrolases superfamily. DHOase family. Class II DHOase subfamily. As to quaternary structure, homodimer. Zn(2+) is required as a cofactor.

The enzyme catalyses (S)-dihydroorotate + H2O = N-carbamoyl-L-aspartate + H(+). Its pathway is pyrimidine metabolism; UMP biosynthesis via de novo pathway; (S)-dihydroorotate from bicarbonate: step 3/3. Its function is as follows. Catalyzes the reversible cyclization of carbamoyl aspartate to dihydroorotate. This Shigella sonnei (strain Ss046) protein is Dihydroorotase.